Reading from the N-terminus, the 242-residue chain is MAKRGKKYLEALKLIDKEKTYSLDEAIQKLKEVEKILQRKFDETVELIFRLGVDPKYADQMVRGSVVLPHGLGRELKVLVIASGEKLKEAEEAGADYAGGEEIINKIANENWIDFDIVIATPDMMPKLAKLGKILGPRGLMPNPKVGTVTTDVKRAVTEAKKGRVEFKVDKTGNLHVPVGKISFEDHKLKENILAVVDAVLKAKPPGAKGQYIRNVVLKTTMSPSVKLNPAELQKALETKAA.

It belongs to the universal ribosomal protein uL1 family. As to quaternary structure, part of the 50S ribosomal subunit.

Binds directly to 23S rRNA. The L1 stalk is quite mobile in the ribosome, and is involved in E site tRNA release. In terms of biological role, protein L1 is also a translational repressor protein, it controls the translation of the L11 operon by binding to its mRNA. The polypeptide is Large ribosomal subunit protein uL1 (Sulfurihydrogenibium sp. (strain YO3AOP1)).